The chain runs to 654 residues: Peptide-N(4)-(N-acetyl-beta-glucosaminyl)asparagine amidase (654 aa).

An N-acetylalanine modification is found at Ala-2. The PUB domain occupies 30 to 91; the sequence is EASKLLLTYA…EGETHLIFPK (62 aa). The segment at 112–163 is disordered; sequence RLDGSNKSHKVKSSQQPAASTQLPTTPSSNPSGLNQHTRNRQGQSSDPPSAS. The span at 124-163 shows a compositional bias: polar residues; sequence SSQQPAASTQLPTTPSSNPSGLNQHTRNRQGQSSDPPSAS. Thr-137 is modified (phosphothreonine). 4 residues coordinate Zn(2+): Cys-250, Cys-253, Cys-283, and Cys-286. Cys-309 acts as the Nucleophile in catalysis. Active-site residues include His-336 and Asp-353. The region spanning 454–654 is the PAW domain; sequence ELGGRISGSV…LEIIIKFSDL (201 aa).

The protein belongs to the transglutaminase-like superfamily. PNGase family. As to quaternary structure, component of a complex required to couple retrotranslocation, ubiquitination and deglycosylation composed of NGLY1, SAKS1, AMFR, VCP and RAD23B. Interacts with the proteasome components RAD23B and PSMC1. Interacts with directly with VCP. Interacts with DERL1, bringing it close to the endoplasmic reticulum membrane. Interacts with SAKS1. Zn(2+) is required as a cofactor.

It is found in the cytoplasm. The enzyme catalyses Hydrolysis of an N(4)-(acetyl-beta-D-glucosaminyl)asparagine residue in which the glucosamine residue may be further glycosylated, to yield a (substituted) N-acetyl-beta-D-glucosaminylamine and a peptide containing an aspartate residue.. With respect to regulation, inhibited by Z-VAD-fmk, a well-known caspase inhibitor, which inhibits enzyme activity through covalent binding of the carbohydrate to the single Cys-306 residue. Its function is as follows. Specifically deglycosylates the denatured form of N-linked glycoproteins in the cytoplasm and assists their proteasome-mediated degradation. Cleaves the beta-aspartyl-glucosamine (GlcNAc) of the glycan and the amide side chain of Asn, converting Asn to Asp. Prefers proteins containing high-mannose over those bearing complex type oligosaccharides. Can recognize misfolded proteins in the endoplasmic reticulum that are exported to the cytosol to be destroyed and deglycosylate them, while it has no activity toward native proteins. Deglycosylation is a prerequisite for subsequent proteasome-mediated degradation of some, but not all, misfolded glycoproteins. This Homo sapiens (Human) protein is Peptide-N(4)-(N-acetyl-beta-glucosaminyl)asparagine amidase (NGLY1).